The sequence spans 178 residues: NADH-quinone oxidoreductase subunit I (178 aa).

4Fe-4S ferredoxin-type domains are found at residues 45-74 (RHPD…VEAA) and 90-119 (KVYE…LGNE). 8 residues coordinate [4Fe-4S] cluster: Cys54, Cys57, Cys60, Cys64, Cys99, Cys102, Cys105, and Cys109.

Belongs to the complex I 23 kDa subunit family. NDH-1 is composed of 15 different subunits. Subunits NuoA, H, J, K, L, M, N constitute the membrane sector of the complex. The cofactor is [4Fe-4S] cluster.

The protein localises to the cell membrane. It carries out the reaction a quinone + NADH + 5 H(+)(in) = a quinol + NAD(+) + 4 H(+)(out). Its function is as follows. NDH-1 shuttles electrons from NADH, via FMN and iron-sulfur (Fe-S) centers, to quinones in the respiratory chain. The immediate electron acceptor for the enzyme in this species is believed to be ubiquinone. Couples the redox reaction to proton translocation (for every two electrons transferred, four hydrogen ions are translocated across the cytoplasmic membrane), and thus conserves the redox energy in a proton gradient. The chain is NADH-quinone oxidoreductase subunit I from Deinococcus radiodurans (strain ATCC 13939 / DSM 20539 / JCM 16871 / CCUG 27074 / LMG 4051 / NBRC 15346 / NCIMB 9279 / VKM B-1422 / R1).